The following is a 222-amino-acid chain: Germin-like protein subfamily 1 member 13 (222 aa).

The N-terminal stretch at 1–18 is a signal peptide; the sequence is MRVSKSLILITLSALVIS. Residues Cys32 and Cys49 are joined by a disulfide bond. The 152-residue stretch at 63 to 214 folds into the Cupin type-1 domain; sequence SGLNQAGSTN…AFQLDVNIVE (152 aa). N-linked (GlcNAc...) asparagine glycosylation is present at Asn78. Mn(2+) contacts are provided by His111, His113, Glu118, and His160.

It belongs to the germin family. As to quaternary structure, oligomer (believed to be a pentamer but probably hexamer).

Its subcellular location is the secreted. The protein localises to the extracellular space. It localises to the apoplast. May play a role in plant defense. Probably has no oxalate oxidase activity even if the active site is conserved. This chain is Germin-like protein subfamily 1 member 13 (GLP6), found in Arabidopsis thaliana (Mouse-ear cress).